The following is a 163-amino-acid chain: MSYKKKRCLKSSIICKNKKAYYNYFIEEVFQSGLVLMGWEVKSIRLGQVNIIESYINNDNLNEMYLYNSIVQPLHTSSNYVSCDSSRKRKLLLHKNEIQYLCNKKNKIGSTLVALSLFWEKSWCKLNFGLAKGKTKIDKRASEKQNEWKKEKLKILKKVKFQN.

This sequence belongs to the SmpB family.

The protein resides in the cytoplasm. Functionally, required for rescue of stalled ribosomes mediated by trans-translation. Binds to transfer-messenger RNA (tmRNA), required for stable association of tmRNA with ribosomes. tmRNA and SmpB together mimic tRNA shape, replacing the anticodon stem-loop with SmpB. tmRNA is encoded by the ssrA gene; the 2 termini fold to resemble tRNA(Ala) and it encodes a 'tag peptide', a short internal open reading frame. During trans-translation Ala-aminoacylated tmRNA acts like a tRNA, entering the A-site of stalled ribosomes, displacing the stalled mRNA. The ribosome then switches to translate the ORF on the tmRNA; the nascent peptide is terminated with the 'tag peptide' encoded by the tmRNA and targeted for degradation. The ribosome is freed to recommence translation, which seems to be the essential function of trans-translation. The chain is SsrA-binding protein from Buchnera aphidicola subsp. Schizaphis graminum (strain Sg).